Consider the following 503-residue polypeptide: MSQKQMKEAFVSNQNGTSVLEITEGLCLPALCILCRGLLIILSQQLCSSLHNSRTRFLVDFAFLIVPLVTTLTIFSSFVLLEYLVAIILGAGLLYEIYCRRTCYARMPFQKICEKFLKVSLESEHIPAISCFRVVNSAFTAVAILAVDFPLFPRRYAKTELYGTGAMDYGVGGFIFGSAMVSPEVRRKYTKGSRFCYLTKSLYSLWPLVFLGVGRLVAIKSVDYQEHLTEYGVHWNFFFTLIAVKLITSLLLLICPLNRSWVVAISIAALYQLALDFTPLKSLILYGTDGSGTRVGLLNANREGIISVLGYVAVHMAGVQTGLYVLKKRSHIKDWIKVACCILLTAIGLFISLYIVQVNVEVASRRMANLAFCIWIVASCLILLSSLLLGDIILSFAKFVIKEAAVPCSWKLIQSPTANKKHLESIVFDAKRKEPTLCLITAMNRNQLLFFLLSNVTTGLVNLSIDTLHSSTPWALCLLNLYMFTNCLIIYVLHLQDKTIKFW.

At 1 to 21 (MSQKQMKEAFVSNQNGTSVLE) the chain is on the lumenal side. Asparagine 15 is a glycosylation site (N-linked (GlcNAc...) asparagine). Residues 22–42 (ITEGLCLPALCILCRGLLIIL) form a helical membrane-spanning segment. The Cytoplasmic segment spans residues 43–56 (SQQLCSSLHNSRTR). The helical transmembrane segment at 57–75 (FLVDFAFLIVPLVTTLTIF) threads the bilayer. At 76 to 78 (SSF) the chain is on the lumenal side. Residues 79–98 (VLLEYLVAIILGAGLLYEIY) form a helical membrane-spanning segment. At 99 to 131 (CRRTCYARMPFQKICEKFLKVSLESEHIPAISC) the chain is on the cytoplasmic side. The helical transmembrane segment at 132-152 (FRVVNSAFTAVAILAVDFPLF) threads the bilayer. Topologically, residues 153-160 (PRRYAKTE) are lumenal. A helical transmembrane segment spans residues 161-181 (LYGTGAMDYGVGGFIFGSAMV). Topologically, residues 182–201 (SPEVRRKYTKGSRFCYLTKS) are cytoplasmic. A helical transmembrane segment spans residues 202 to 222 (LYSLWPLVFLGVGRLVAIKSV). The Lumenal segment spans residues 223–236 (DYQEHLTEYGVHWN). A helical transmembrane segment spans residues 237 to 257 (FFFTLIAVKLITSLLLLICPL). Residues 258–259 (NR) are Cytoplasmic-facing. Residues 260-280 (SWVVAISIAALYQLALDFTPL) form a helical membrane-spanning segment. The Lumenal segment spans residues 281–304 (KSLILYGTDGSGTRVGLLNANREG). A helical transmembrane segment spans residues 305–325 (IISVLGYVAVHMAGVQTGLYV). At 326–337 (LKKRSHIKDWIK) the chain is on the cytoplasmic side. A helical transmembrane segment spans residues 338-358 (VACCILLTAIGLFISLYIVQV). The Lumenal portion of the chain corresponds to 359-369 (NVEVASRRMAN). The helical transmembrane segment at 370-390 (LAFCIWIVASCLILLSSLLLG) threads the bilayer. Topologically, residues 391–447 (DIILSFAKFVIKEAAVPCSWKLIQSPTANKKHLESIVFDAKRKEPTLCLITAMNRNQ) are cytoplasmic. Phosphoserine is present on serine 415. The helical transmembrane segment at 448–468 (LLFFLLSNVTTGLVNLSIDTL) threads the bilayer. At 469 to 472 (HSST) the chain is on the lumenal side. The helical transmembrane segment at 473–493 (PWALCLLNLYMFTNCLIIYVL) threads the bilayer. At 494–503 (HLQDKTIKFW) the chain is on the cytoplasmic side.

It belongs to the PIGW family.

It localises to the endoplasmic reticulum membrane. It participates in glycolipid biosynthesis; glycosylphosphatidylinositol-anchor biosynthesis. Functionally, acyltransferase that catalyzes the acyl transfer from an acyl-CoA at the 2-OH position of the inositol ring of glucosaminyl phosphatidylinositol (GlcN-PI) to generate glucosaminyl acyl phosphatidylinositol (GlcN-(acyl)PI) and participates in the fourth step of GPI-anchor biosynthesis. Required for the transport of GPI-anchored proteins to the plasma membrane. Acetylation during GPI-anchor biosynthesis is not essential for the subsequent mannosylation and is usually removed soon after the attachment of GPIs to proteins. The chain is Glucosaminyl-phosphatidylinositol-acyltransferase PIGW from Bos taurus (Bovine).